The primary structure comprises 152 residues: Large ribosomal subunit protein bL9 (152 aa).

It belongs to the bacterial ribosomal protein bL9 family.

Its function is as follows. Binds to the 23S rRNA. The sequence is that of Large ribosomal subunit protein bL9 from Mycobacterium leprae (strain Br4923).